Reading from the N-terminus, the 419-residue chain is Peptide chain release factor subunit 1 (419 aa).

The protein belongs to the eukaryotic release factor 1 family. As to quaternary structure, heterodimer of two subunits, one of which binds GTP.

The protein resides in the cytoplasm. Its function is as follows. Directs the termination of nascent peptide synthesis (translation) in response to the termination codons UAA, UAG and UGA. This Methanococcus vannielii (strain ATCC 35089 / DSM 1224 / JCM 13029 / OCM 148 / SB) protein is Peptide chain release factor subunit 1.